The primary structure comprises 206 residues: Large ribosomal subunit protein uL4 (206 aa).

Positions 49–73 (KTKTISEISGTTKKPFAQKGGGRAR) are disordered.

It belongs to the universal ribosomal protein uL4 family. In terms of assembly, part of the 50S ribosomal subunit.

One of the primary rRNA binding proteins, this protein initially binds near the 5'-end of the 23S rRNA. It is important during the early stages of 50S assembly. It makes multiple contacts with different domains of the 23S rRNA in the assembled 50S subunit and ribosome. Its function is as follows. Forms part of the polypeptide exit tunnel. The protein is Large ribosomal subunit protein uL4 of Paramagnetospirillum magneticum (strain ATCC 700264 / AMB-1) (Magnetospirillum magneticum).